A 226-amino-acid polypeptide reads, in one-letter code: Pre-mRNA-splicing factor SPF27 (226 aa).

Residue A2 is modified to N-acetylalanine. At S94 the chain carries Phosphoserine. The stretch at 139 to 223 (YNENLVHMIE…HGEANKENIR (85 aa)) forms a coiled coil.

Belongs to the SPF27 family. As to quaternary structure, component of the pre-catalytic and catalytic spliceosome complexes. Component of the postcatalytic spliceosome P complex. Component of the PRP19-CDC5L splicing complex composed of a core complex comprising a homotetramer of PRPF19, CDC5L, PLRG1 and BCAS2, and at least three less stably associated proteins CTNNBL1, CWC15 and HSPA8. Interacts directly in the complex with PRPF19, CDC5L and PLRG1.

The protein localises to the nucleus. It localises to the nucleolus. Its function is as follows. Required for pre-mRNA splicing as component of the activated spliceosome. Component of the PRP19-CDC5L complex that forms an integral part of the spliceosome and is required for activating pre-mRNA splicing. May have a scaffolding role in the spliceosome assembly as it contacts all other components of the core complex. The PRP19-CDC5L complex may also play a role in the response to DNA damage (DDR). The chain is Pre-mRNA-splicing factor SPF27 (BCAS2) from Pongo abelii (Sumatran orangutan).